The primary structure comprises 142 residues: Large ribosomal subunit protein uL13 (142 aa).

Belongs to the universal ribosomal protein uL13 family. Part of the 50S ribosomal subunit.

In terms of biological role, this protein is one of the early assembly proteins of the 50S ribosomal subunit, although it is not seen to bind rRNA by itself. It is important during the early stages of 50S assembly. The sequence is that of Large ribosomal subunit protein uL13 from Aromatoleum aromaticum (strain DSM 19018 / LMG 30748 / EbN1) (Azoarcus sp. (strain EbN1)).